A 120-amino-acid polypeptide reads, in one-letter code: Dihydroneopterin triphosphate 2'-epimerase (120 aa).

It belongs to the DHNA family. In terms of assembly, homooctamer.

The catalysed reaction is 7,8-dihydroneopterin 3'-triphosphate = 7,8-dihydromonapterin 3'-triphosphate. In terms of biological role, catalyzes the epimerization of carbon 2' of the side chain of 7,8-dihydroneopterin triphosphate (H2NTP) to form 7,8-dihydromonapterin triphosphate (H2MTP). Is required for tetrahydromonapterin biosynthesis. This chain is Dihydroneopterin triphosphate 2'-epimerase (folX), found in Escherichia coli O157:H7.